We begin with the raw amino-acid sequence, 460 residues long: uncharacterized protein (460 aa).

This is an uncharacterized protein from Haemophilus influenzae (strain ATCC 51907 / DSM 11121 / KW20 / Rd).